We begin with the raw amino-acid sequence, 792 residues long: DEAD-box ATP-dependent RNA helicase 40 (792 aa).

Positions 1–16 (MSAGTAPAAPRYAPDD) are enriched in low complexity. 2 disordered regions span residues 1 to 25 (MSAG…PWRG) and 44 to 118 (TQYE…PLPA). One can recognise a WW domain in the interval 17 to 51 (PSLPKPWRGLVDGTTGYLYYWNPETNITQYEKPLP). Over residues 52 to 68 (PEDQLPPPPPLPPPPPR) the composition is skewed to pro residues. Basic and acidic residues-rich tracts occupy residues 70–80 (GRGDRDRDRRD) and 88–108 (PRRD…DHRS). Positions 150–178 (TSFETGGFPPEILKEIQRAGFSSPTPIQA) match the Q motif motif. One can recognise a Helicase ATP-binding domain in the interval 181-355 (WPIALQCQDV…EDLLVHPVQV (175 aa)). An ATP-binding site is contributed by 194-201 (AKTGSGKT). Positions 303–306 (DEAD) match the DEAD box motif. Positions 384–528 (RLEQILRSQD…RVPRDLADMA (145 aa)) constitute a Helicase C-terminal domain. Residues 523–792 (DLADMASRGG…NATVQNGGDN (270 aa)) are disordered. 2 stretches are compositionally biased toward basic and acidic residues: residues 543 to 560 (TRSD…RYGG) and 572 to 588 (DSSR…DGRS). Composition is skewed to basic residues over residues 589–599 (RRSGRGRSRSR) and 609–654 (RSPK…RRHE). Over residues 668–708 (GHGERKRTPEADPSRNHTNHSDPKDDRHPEDGKVGKVDLDR) the composition is skewed to basic and acidic residues. Over residues 725-739 (GKTSRSVSPGNQVEG) the composition is skewed to polar residues. Acidic residues predominate over residues 764-777 (DEEEGMIDEDGEIA).

This sequence belongs to the DEAD box helicase family. DDX5/DBP2 subfamily.

Its subcellular location is the nucleus. The catalysed reaction is ATP + H2O = ADP + phosphate + H(+). ATP-dependent RNA helicase involved nonsense-mediated mRNA decay and ribosome biogenesis through rRNA processing. The polypeptide is DEAD-box ATP-dependent RNA helicase 40 (Oryza sativa subsp. japonica (Rice)).